Reading from the N-terminus, the 154-residue chain is MHSSLLWLGAVVALLAVNNVTAVSTEANGQVALSTSKGQLAGERAEEENSIVRSLRAVETSEDEEERDLLGLFAKSKLKKMMKSESFKLKRFGEWDDFTVGYIREKLKNKYPDLLLNYLNVYKKAGNEIVRHANNPNKVTFSNKVRARIYKTNS.

An N-terminal signal peptide occupies residues 1–22 (MHSSLLWLGAVVALLAVNNVTA). The RxLR-dEER motif lies at 53–67 (RSLRAVETSEDEEER). Position 138 (Lys138) is a short sequence motif, PP1c-binding motif.

The protein belongs to the RxLR effector family. Interacts with the potato PP1c family proteins PP1c-1, PP1c-2 and PP1c-3.

It localises to the secreted. It is found in the host nucleus. Its subcellular location is the host nucleoplasm. The protein localises to the host nucleolus. Functionally, effector that interacts with isoforms of host protein phosphatase type 1c (PP1c), mimicking a regulatory subunit and causing their re-localization within the host nucleus. The holoenzymes formed with PP1c isoforms act to promote late blight by attenuating jasmonic acid (JA)- and salicylic acid (SA)-mediated transcriptional responses of the host plant. This Phytophthora infestans (strain T30-4) (Potato late blight agent) protein is RxLR effector protein PexRD24.